Here is a 306-residue protein sequence, read N- to C-terminus: Methionyl-tRNA formyltransferase (306 aa).

110–113 contributes to the (6S)-5,6,7,8-tetrahydrofolate binding site; that stretch reads SLLP.

Belongs to the Fmt family.

The catalysed reaction is L-methionyl-tRNA(fMet) + (6R)-10-formyltetrahydrofolate = N-formyl-L-methionyl-tRNA(fMet) + (6S)-5,6,7,8-tetrahydrofolate + H(+). Attaches a formyl group to the free amino group of methionyl-tRNA(fMet). The formyl group appears to play a dual role in the initiator identity of N-formylmethionyl-tRNA by promoting its recognition by IF2 and preventing the misappropriation of this tRNA by the elongation apparatus. The protein is Methionyl-tRNA formyltransferase of Brucella abortus (strain S19).